We begin with the raw amino-acid sequence, 314 residues long: tRNA-cytidine(32) 2-sulfurtransferase (314 aa).

The PP-loop motif signature appears at 49 to 54 (SGGKDS). [4Fe-4S] cluster is bound by residues Cys124, Cys127, and Cys215.

This sequence belongs to the TtcA family. As to quaternary structure, homodimer. It depends on Mg(2+) as a cofactor. [4Fe-4S] cluster is required as a cofactor.

The protein localises to the cytoplasm. It catalyses the reaction cytidine(32) in tRNA + S-sulfanyl-L-cysteinyl-[cysteine desulfurase] + AH2 + ATP = 2-thiocytidine(32) in tRNA + L-cysteinyl-[cysteine desulfurase] + A + AMP + diphosphate + H(+). The protein operates within tRNA modification. Catalyzes the ATP-dependent 2-thiolation of cytidine in position 32 of tRNA, to form 2-thiocytidine (s(2)C32). The sulfur atoms are provided by the cysteine/cysteine desulfurase (IscS) system. The sequence is that of tRNA-cytidine(32) 2-sulfurtransferase from Pasteurella multocida (strain Pm70).